The following is a 446-amino-acid chain: Cytochrome P450 monooxygenase ATR14 (446 aa).

The tract at residues 403-446 (NFTYPDEFRPDRWLDDRDQKEYEHDHGDAMQPFSVGPRDCPSQK) is disordered. A compositionally biased stretch (basic and acidic residues) spans 408 to 430 (DEFRPDRWLDDRDQKEYEHDHGD). A heme-binding site is contributed by C442.

This sequence belongs to the cytochrome P450 family. Heme serves as cofactor.

The protein operates within mycotoxin biosynthesis. Functionally, cytochrome P450 monooxygenase; part of the core atranone cluster (CAC) which products are predicted to catalyze most or all steps of mycotoxin atranone synthesis, starting from geranylgeranyl pyrophosphate (GGPP). The initial cyclization of GGPP to dolabellane is probably performed by the terpene cyclase ATR13. The Baeyer-Villiger oxidation near the end of the atranone synthesis, which converts atranones D and E to atranones F and G is predicted to be catalyzed by the monooxygenase ATR8. Of the CAC's other predicted gene products, the reducing PKS ATR6 might synthesize a polyketide chain. This polyketide is probably transferred onto the atranone backbone by the polyketide transferase ATR5. Other predicted CAC products include 4 oxygenases (ATR2, ATR3, ATR4, and ATR14), 3 short-chain reductases (ATR7, ATR9, and ATR10), and a methyltransferase (ATR12). These may all be involved in the various steps of atranone biosynthesis, although their specific roles must await experimental determination. The polypeptide is Cytochrome P450 monooxygenase ATR14 (Stachybotrys chlorohalonatus (strain IBT 40285)).